Here is a 653-residue protein sequence, read N- to C-terminus: Epithelial sodium channel subunit gamma (653 aa).

The Cytoplasmic segment spans residues 1-54; it reads MGHGRRISESIKKQLPVTGPEAPTVKNLMDWYLNNTNTHGCRRIAVSRGYLRRW. Residues 55–75 form a helical membrane-spanning segment; that stretch reads IWICFTVSSVGMIFWQWTLLL. Topologically, residues 76-546 are extracellular; the sequence is MSYYTVSVSV…GGQLGLWMSC (471 aa). 8 disulfides stabilise this stretch: Cys100/Cys290, Cys214/Cys221, Cys267/Cys274, Cys379/Cys464, Cys401/Cys460, Cys405/Cys456, Cys414/Cys441, and Cys416/Cys430. The helical transmembrane segment at 547–567 threads the bilayer; it reads SIVCFLEMWEVFLVDILTIIA. The Cytoplasmic portion of the chain corresponds to 568–653; the sequence is RYWLHRGRQW…DEQVSDTEVN (86 aa). Residues 582-608 are disordered; that stretch reads KERQMQQPSPPDHDTGHHNPVCIDDED.

It belongs to the amiloride-sensitive sodium channel (TC 1.A.6) family. SCNN1G subfamily. As to quaternary structure, component of the heterotrimeric epithelial sodium channel (ENaC) composed of an alpha/SCNN1A, a beta/SCNN1B and a gamma/SCNN1G subunit. Strongly expressed in gill, liver, kidney and rectum and more weakly in heart, muscle and intestine.

The protein localises to the apical cell membrane. It catalyses the reaction Na(+)(in) = Na(+)(out). With respect to regulation, originally identified and characterized by its inhibition by the diuretic drug amiloride. Its function is as follows. This is one of the three pore-forming subunits of the heterotrimeric epithelial sodium channel (ENaC), a critical regulator of sodium balance and fluid homeostasis. ENaC operates in epithelial tissues, where it mediates the electrodiffusion of sodium ions from extracellular fluid through the apical membrane of cells, with water following osmotically. The sequence is that of Epithelial sodium channel subunit gamma from Neoceratodus forsteri (Australian lungfish).